Here is an 875-residue protein sequence, read N- to C-terminus: Alanine--tRNA ligase (875 aa).

4 residues coordinate Zn(2+): histidine 564, histidine 568, cysteine 666, and histidine 670.

The protein belongs to the class-II aminoacyl-tRNA synthetase family. In terms of assembly, homotetramer. Zn(2+) is required as a cofactor.

The protein resides in the cytoplasm. It catalyses the reaction tRNA(Ala) + L-alanine + ATP = L-alanyl-tRNA(Ala) + AMP + diphosphate. Catalyzes the attachment of alanine to tRNA(Ala) in a two-step reaction: alanine is first activated by ATP to form Ala-AMP and then transferred to the acceptor end of tRNA(Ala). Also edits incorrectly charged Ser-tRNA(Ala) and Gly-tRNA(Ala) via its editing domain. This Enterobacter sp. (strain 638) protein is Alanine--tRNA ligase.